Here is a 279-residue protein sequence, read N- to C-terminus: MNYQDNSLKSLKLGQKTEYASQYDRTLLQPVPRALNRDGLGITQNQPFTIGADIWTAYEISWLNEKGLPQVAIADIYLDYQSQNLIESKSFKLYLNSFNQSKFADFNAVQQTMQRDLIECAQGDVKVRLNPVAVYDAQKIEHLQGDCIDEQDIEITSYEFNADWLKDCVSDEIVEEKLVSHLLKSNCLITNQPDWGTLHIHYVGKKINQEKLLRYVVSFRQHNEFHEQCVERIFCDLMHYAKPEKLTVYARYTRRGGLDINPFRSNFENLPENLRLARQ.

Residue 86–88 (IES) coordinates substrate. 88–89 (SK) contributes to the NADPH binding site. Catalysis depends on Cys187, which acts as the Thioimide intermediate. The active-site Proton donor is Asp194. A substrate-binding site is contributed by 226 to 227 (HE). 255 to 256 (RG) contacts NADPH.

It belongs to the GTP cyclohydrolase I family. QueF type 2 subfamily. In terms of assembly, homodimer.

Its subcellular location is the cytoplasm. It carries out the reaction 7-aminomethyl-7-carbaguanine + 2 NADP(+) = 7-cyano-7-deazaguanine + 2 NADPH + 3 H(+). Its pathway is tRNA modification; tRNA-queuosine biosynthesis. Catalyzes the NADPH-dependent reduction of 7-cyano-7-deazaguanine (preQ0) to 7-aminomethyl-7-deazaguanine (preQ1). The chain is NADPH-dependent 7-cyano-7-deazaguanine reductase from Haemophilus influenzae (strain PittEE).